The chain runs to 368 residues: 2-deoxy-scyllo-inosose synthase (368 aa).

NAD(+) contacts are provided by residues aspartate 42, 72 to 75 (EEYK), 104 to 108 (GLTGN), 128 to 129 (TT), 139 to 141 (SIK), 150 to 151 (KN), and glutamine 176. Residue lysine 141 is part of the active site. Residue glutamate 183 coordinates Co(2+). Glutamate 243 is a catalytic residue. Co(2+)-binding residues include histidine 246 and histidine 262.

The protein belongs to the sugar phosphate cyclases superfamily. DOI synthase family. Was isolated as a heterodimeric enzyme comprising of BtrC and a smaller polypeptide further identified as PdxT by sequence homology. Homodimer in solution. The cofactor is NAD(+). Co(2+) serves as cofactor.

It catalyses the reaction D-glucose 6-phosphate = 2-deoxy-L-scyllo-inosose + phosphate. It functions in the pathway metabolic intermediate biosynthesis; 2-deoxystreptamine biosynthesis; 2-deoxystreptamine from D-glucose 6-phosphate: step 1/4. The protein operates within antibiotic biosynthesis; butirosin biosynthesis. Strongly inhibited by EDTA, zinc and Cu(2+). In terms of biological role, catalyzes the intramolecular carbocycle formation from D-glucose-6-phosphate to 2-deoxy-scyllo-inosose (DOI). In Niallia circulans (Bacillus circulans), this protein is 2-deoxy-scyllo-inosose synthase (btrC).